The primary structure comprises 215 residues: Small ribosomal subunit protein uS7 (215 aa).

This sequence belongs to the universal ribosomal protein uS7 family. In terms of assembly, part of the 30S ribosomal subunit.

One of the primary rRNA binding proteins, it binds directly to 16S rRNA where it nucleates assembly of the head domain of the 30S subunit. Is located at the subunit interface close to the decoding center. The chain is Small ribosomal subunit protein uS7 from Pyrococcus furiosus (strain ATCC 43587 / DSM 3638 / JCM 8422 / Vc1).